The chain runs to 179 residues: Bacterioferritin (179 aa).

In terms of domain architecture, Ferritin-like diiron spans 1 to 150 (MAGNREDRKA…NIGSHIKNLG (150 aa)). The Fe cation site is built by E23 and E56. M57 contacts Fe-coproporphyrin III. H59, E99, E132, and H135 together coordinate Fe cation.

This sequence belongs to the bacterioferritin family. Homooligomer of 24 subunits, arranged as 12 dimers, that are packed together to form an approximately spherical molecule with a central cavity, in which large amounts of iron can be deposited. It depends on Fe-coproporphyrin III as a cofactor. The cofactor is Fe cation.

It catalyses the reaction 4 Fe(2+) + O2 + 4 H(+) = 4 Fe(3+) + 2 H2O. The catalysed reaction is Fe(2+)(in) = Fe(2+)(out). Iron-storage protein, whose ferroxidase center binds Fe(2+), oxidizes it using dioxygen to Fe(3+), and participates in the subsequent Fe(3+) oxide mineral core formation within the central cavity of the BFR protein shell. In Desulfovibrio desulfuricans (strain ATCC 27774 / DSM 6949 / MB), this protein is Bacterioferritin (bfr).